The following is a 371-amino-acid chain: Putative glutamate--cysteine ligase 2 (371 aa).

The protein belongs to the glutamate--cysteine ligase type 2 family. YbdK subfamily. As to quaternary structure, homodimer.

It catalyses the reaction L-cysteine + L-glutamate + ATP = gamma-L-glutamyl-L-cysteine + ADP + phosphate + H(+). In terms of biological role, ATP-dependent carboxylate-amine ligase which exhibits weak glutamate--cysteine ligase activity. The polypeptide is Putative glutamate--cysteine ligase 2 (Cronobacter sakazakii (strain ATCC BAA-894) (Enterobacter sakazakii)).